The sequence spans 148 residues: Lysozyme C (148 aa).

An N-terminal signal peptide occupies residues 1–18 (MKVLIILGLVLLSVMVQG). One can recognise a C-type lysozyme domain in the interval 19–148 (KVFERCELAR…VSQYVQGCGV (130 aa)). 4 disulfides stabilise this stretch: C24/C146, C48/C134, C83/C99, and C95/C113. Catalysis depends on residues E53 and D71.

The protein belongs to the glycosyl hydrolase 22 family. In terms of assembly, monomer.

It catalyses the reaction Hydrolysis of (1-&gt;4)-beta-linkages between N-acetylmuramic acid and N-acetyl-D-glucosamine residues in a peptidoglycan and between N-acetyl-D-glucosamine residues in chitodextrins.. Functionally, lysozymes have primarily a bacteriolytic function; those in tissues and body fluids are associated with the monocyte-macrophage system and enhance the activity of immunoagents. In Callithrix jacchus (White-tufted-ear marmoset), this protein is Lysozyme C (LYZ).